Here is a 949-residue protein sequence, read N- to C-terminus: Translation initiation factor IF-2 (949 aa).

Disordered regions lie at residues 46 to 82, 145 to 176, and 188 to 361; these read LTAS…EAEA, EPAV…ERAS, and IPIT…KTEL. The segment covering 152–162 has biased composition (low complexity); that stretch reads ASPAVTAAKPV. Residues 163–172 are compositionally biased toward pro residues; the sequence is PATPAAPPQP. Low complexity predominate over residues 263-276; sequence PRDAAAPRPAGARP. Residues 334-344 are compositionally biased toward basic and acidic residues; that stretch reads SREERQFDPFH. The 170-residue stretch at 449–618 folds into the tr-type G domain; it reads ERPPVVTIMG…LLQADLMDLK (170 aa). The interval 458-465 is G1; the sequence is GHVDHGKT. 458–465 contributes to the GTP binding site; that stretch reads GHVDHGKT. A G2 region spans residues 483–487; the sequence is GITQH. Residues 504 to 507 form a G3 region; the sequence is DTPG. Residues 504–508 and 558–561 each bind GTP; these read DTPGH and NKID. The G4 stretch occupies residues 558–561; the sequence is NKID. Residues 594-596 form a G5 region; it reads SAK.

The protein belongs to the TRAFAC class translation factor GTPase superfamily. Classic translation factor GTPase family. IF-2 subfamily.

It is found in the cytoplasm. One of the essential components for the initiation of protein synthesis. Protects formylmethionyl-tRNA from spontaneous hydrolysis and promotes its binding to the 30S ribosomal subunits. Also involved in the hydrolysis of GTP during the formation of the 70S ribosomal complex. The polypeptide is Translation initiation factor IF-2 (Trichlorobacter lovleyi (strain ATCC BAA-1151 / DSM 17278 / SZ) (Geobacter lovleyi)).